Here is a 1452-residue protein sequence, read N- to C-terminus: MEGGEELFRVSSARLSSSNVWRNSAMDVFSRSSREADDEEALKWAALEKLPTYLRIRRGILTEEEGQSREVDITKLDLVERRNLLERLIKITDEDNEKFLLKLKERIDRVGLDLPTIEVRFEHLSVDAEARVGSRALPTVFNFTVNILEDFLNYLHILPNRKQPLPILHDVSGIIKPGRMTLLLGPPSSGKTTLLLALAGKLDKDLKVSGRVTYNGHDMNEFVAQRSSAYISQYDLHIGEMTVRETLAFSARCQGVGAKYEILAELSRREKEANIKPDPDVDIFMKAAWNEGQEANVVTDYTLKILGLEICADTIVGDEMVRGISGGQRKRLTTGEMMVGPARALFMDEISTGLDSSTTYQIVNSIRQSIHILQGTAVISLLQPAPETYDLFDDIILLSDGQIVYQGPRENVLEFFEYMGFICPERKGVADFLQEVTSRKDQEQYWARREESYKFITVREFSEAFQAFHIGRKLGDELAVPFDKSKSHPAALTTKRYGVSKKELLKACTAREYLLMKRNSFVYIFKMIQLTLMASITMTLFLPTEMHRNTTIDGAVFLGALFYALIMIMFNGFSELALSIMKLPSFYKHRDLLFFPPWAYALPTWILKIPITLVEVAIWVCMTYYVIGFEADVGRFFKQLLLLICVNQMASGLFRLMGALGRNIIVANTFGSFVLLTVLVMGGFVLSRDDVKKWWIWGYWISPMMYAQNAIAVNEFLGKSWAHVPPNSTSTETLGVSFLKSRGIFPDARWYWIGAGALIGYVFLFNFLFAVALAYLNPFGKPQAVLSEETVAERNASKRGEVIELSSLGKSSSEKGNDVRRSASSRSMSSRVGSITAADLSKRRGMILPFEPLSITFDDIRYAVDMPQEMKAQGFTEDRLELLRGVSGAFRPGVLTALMGVSGAGKTTLMDVLAGRKTGGYIDGTISISGYPKQQETFARIAGYCEQTDIHSPHVTVYESLQFSAWLRLPREVDTATRKMFIEEVMELIELIPLRDALVGLPGVNGLSTEQRKRLTVAVELVANPSIIFMDEPTSGLDARAAAIVMRTVRNTVDTGRTVVCTIHQPSIDIFDAFDELLLLKRGGEEIYVGPLGRQSSHLIKYFEGIDGVPKIKDGYNPATWMLEITSVAQEGALGNDFTELYKNSELYRRNKALIKELSVPASCSKDLYFPTKYSQSFFTQCMACFWKQHWSYWRNPPYTAVRIMFTFFIALMFGTIFWDLGSRRERQQDLLNAIGSMYIAVLFLGVQNATTVQPVIAIERTVFYRERAAGMYSAMPYAFGQVMIELPYLFLQTIIYGVIVYAMIGFEWTVAKFFWYLFFMYFTLLYFTLYGMMTVAVTPNQSIAAIISSAFYAVWNLFCGFIVPKTRMPVWWRWYYYICPISWTLYGLIASQFGDIQDRLDTNETVEQFIENFFDFKHDFVGYVALILVGISVLFLFIFAFSIKTFNFQKR.

The ABC transporter 1 domain maps to 152–425 (LNYLHILPNR…FEYMGFICPE (274 aa)). 185–192 (GPPSSGKT) is an ATP binding site. Residues 504 to 716 (LLKACTAREY…AQNAIAVNEF (213 aa)) form the ABC transmembrane type-2 1 domain. A run of 7 helical transmembrane segments spans residues 521–541 (FVYI…MTLF), 554–574 (GAVF…NGFS), 609–629 (IPIT…VIGF), 640–660 (LLLL…MGAL), 664–684 (IIVA…MGGF), 694–714 (WWIW…IAVN), and 753–773 (IGAG…AVAL). The interval 808 to 830 (LGKSSSEKGNDVRRSASSRSMSS) is disordered. Over residues 812 to 821 (SSEKGNDVRR) the composition is skewed to basic and acidic residues. One can recognise an ABC transporter 2 domain in the interval 855–1107 (ITFDDIRYAV…HLIKYFEGID (253 aa)). ATP is bound at residue 900–907 (GVSGAGKT). Residues 1180–1394 (TQCMACFWKQ…TLYGLIASQF (215 aa)) form the ABC transmembrane type-2 2 domain. 7 helical membrane passes run 1199 to 1219 (YTAV…TIFW), 1239 to 1259 (YIAV…VIAI), 1287 to 1307 (LPYL…MIGF), 1314 to 1334 (FFWY…YGMM), 1344 to 1364 (IAAI…GFIV), 1375 to 1395 (WYYY…SQFG), and 1421 to 1441 (FVGY…FIFA).

This sequence belongs to the ABC transporter superfamily. ABCG family. PDR (TC 3.A.1.205) subfamily. Expressed in root hypodermal passage cells. Expressed in stem tissues, particularly the vasculature and nodes adjacent to leaf axils.

It is found in the cell membrane. In terms of biological role, cellular strigolactone (SL) transporter required for the exudation of SL from the root to the soil. The presence of SL in the vicinity of the roots is required for development of symbiotic interactions with arbuscular mycorrhizal fungi (AMF). Transports SL in the above ground tissues and is required for the control of shoot branching. SL regulates plant shoot architecture by inhibiting the outgrowth of axillary buds. Involved in the regulation of shootward and outward directional strigolactone transport in roots. Due to its polar localization in root cells, mediates directional shootward strigolactone transport, as well as localized outward directional transport for exudation to the soil. In Petunia hybrida (Petunia), this protein is Pleiotropic drug resistance protein 1.